The chain runs to 214 residues: Ras-related protein RABA5c (214 aa).

19-26 (GDSAVGKS) provides a ligand contact to GTP. An Effector region motif is present at residues 41 to 49 (SKATIGVEF). Residues 67–71 (DTAGQ), 125–128 (NKCD), and 155–156 (SA) contribute to the GTP site. 2 S-geranylgeranyl cysteine lipidation sites follow: C211 and C212.

It belongs to the small GTPase superfamily. Rab family. As to quaternary structure, interacts (via C-terminus) with GDI1. Interacts with PUX8/SAY1. As to expression, expressed in roots and actively dividing cells.

It localises to the golgi apparatus membrane. It is found in the golgi apparatus. The protein localises to the trans-Golgi network membrane. The protein resides in the cell membrane. Its function is as follows. Intracellular vesicle trafficking and protein transport. Binds GTP and GDP and possesses intrinsic GTPase activity. The chain is Ras-related protein RABA5c (RABA5C) from Arabidopsis thaliana (Mouse-ear cress).